Reading from the N-terminus, the 98-residue chain is uncharacterized protein (98 aa).

Positions 58 to 98 are disordered; sequence ARFPVEDTAGGLLRTGGHRPQISDEEVSKRHHEQSHGQEDH.

This is an uncharacterized protein from Saccharomyces cerevisiae (strain ATCC 204508 / S288c) (Baker's yeast).